Here is a 132-residue protein sequence, read N- to C-terminus: Agouti-signaling protein (132 aa).

A signal peptide spans 1–22; that stretch reads MDVTRLLLATLLVFLCFFTAYS. N-linked (GlcNAc...) asparagine glycosylation is present at asparagine 39. Residues 61 to 87 form a disordered region; the sequence is QISRKEAEKKRSSKKEASMKKVARPRT. Over residues 63–79 the composition is skewed to basic and acidic residues; that stretch reads SRKEAEKKRSSKKEASM. Disulfide bonds link cysteine 93/cysteine 108, cysteine 100/cysteine 114, cysteine 107/cysteine 125, cysteine 111/cysteine 132, and cysteine 116/cysteine 123. Residues 93–132 enclose the Agouti domain; the sequence is CVATRDSCKPPAPACCDPCAFCQCRFFRSACSCRVLSLNC.

It localises to the secreted. Functionally, involved in the regulation of melanogenesis. The binding of ASP to MC1R precludes alpha-MSH initiated signaling and thus blocks production of cAMP, leading to a down-regulation of eumelanogenesis (brown/black pigment) and thus increasing synthesis of pheomelanin (yellow/red pigment). The protein is Agouti-signaling protein (ASIP) of Macaca hecki (Heck's macaque).